The sequence spans 320 residues: Dual oxidase maturation factor 2 (320 aa).

A helical membrane pass occupies residues 22–42; that stretch reads VPLLIVILVFLSLAASFLFIL. The Cytoplasmic segment spans residues 43 to 51; it reads PGIRGHSRW. The helical transmembrane segment at 52-72 threads the bilayer; it reads FWLVRVLLSLFIGAEIVAVHF. Residues 73 to 183 lie on the Extracellular side of the membrane; the sequence is SGDWFVGRVW…HLAGHYAAAT (111 aa). Residues asparagine 84, asparagine 109, and asparagine 121 are each glycosylated (N-linked (GlcNAc...) asparagine). A helical transmembrane segment spans residues 184–204; that stretch reads LWVAFCFWIIANALLSMPAPL. Topologically, residues 205–206 are cytoplasmic; sequence YG. The chain crosses the membrane as a helical span at residues 207–227; it reads GLALLTTGAFTLFGVFAFASI. The Extracellular portion of the chain corresponds to 228-249; it reads SSVPLCHFRLGSAVLTPYYGAS. The chain crosses the membrane as a helical span at residues 250 to 270; sequence FWLTLATGILSLLLGGAVVIL. Topologically, residues 271 to 320 are cytoplasmic; the sequence is HYTRPSALRSFLDLSVKDCSNQAKGNSPLTLNNPQHEQLKSPDLNITTLL.

Belongs to the DUOXA family. As to quaternary structure, heterodimer with DUXA2; disulfide-linked. Interacts with CSNK1G2. Post-translationally, N-glycosylated.

Its subcellular location is the endoplasmic reticulum membrane. Its function is as follows. Required for the maturation and the transport from the endoplasmic reticulum to the plasma membrane of functional DUOX2. May play a role in thyroid hormone synthesis. This Mus musculus (Mouse) protein is Dual oxidase maturation factor 2 (Duoxa2).